Here is a 172-residue protein sequence, read N- to C-terminus: uncharacterized protein (172 aa).

The segment at 130 to 154 (EQEKGAAPQEGKDWQVISEEDKKNQ) is disordered.

This is an uncharacterized protein from Bacillus subtilis (strain 168).